Here is a 371-residue protein sequence, read N- to C-terminus: Putative glutamate--cysteine ligase 2 (371 aa).

The protein belongs to the glutamate--cysteine ligase type 2 family. YbdK subfamily.

The catalysed reaction is L-cysteine + L-glutamate + ATP = gamma-L-glutamyl-L-cysteine + ADP + phosphate + H(+). ATP-dependent carboxylate-amine ligase which exhibits weak glutamate--cysteine ligase activity. The chain is Putative glutamate--cysteine ligase 2 from Paraburkholderia phytofirmans (strain DSM 17436 / LMG 22146 / PsJN) (Burkholderia phytofirmans).